The following is a 319-amino-acid chain: Cobalamin biosynthesis protein CbiB (319 aa).

Transmembrane regions (helical) follow at residues 52 to 74 (IGGGVMWVVVVGVTWGVAWGVLA), 79 to 101 (IHPWFGWSVEVWMIFTTLAGRSL), 155 to 177 (GIIAPLFFLFLGGAPLAMAYKAV), 207 to 229 (YLPARLSWLLLGIAAGLCRLSGW), and 296 to 318 (LMWVASTLALALFIAARCGLSGV).

It belongs to the CobD/CbiB family.

The protein resides in the cell membrane. It functions in the pathway cofactor biosynthesis; adenosylcobalamin biosynthesis; adenosylcobalamin from cob(II)yrinate a,c-diamide: step 4/7. In terms of biological role, converts cobyric acid to cobinamide by the addition of aminopropanol on the F carboxylic group. However, the true cosubstrate could be (R)-1-amino-2-propanol O-2-phosphate, leading to cobinamide phosphate. This Salmonella typhi protein is Cobalamin biosynthesis protein CbiB.